The following is a 207-amino-acid chain: Urease accessory protein UreG (207 aa).

A GTP-binding site is contributed by 12–19; the sequence is GPVGAGKT.

The protein belongs to the SIMIBI class G3E GTPase family. UreG subfamily. Homodimer. UreD, UreF and UreG form a complex that acts as a GTP-hydrolysis-dependent molecular chaperone, activating the urease apoprotein by helping to assemble the nickel containing metallocenter of UreC. The UreE protein probably delivers the nickel.

The protein localises to the cytoplasm. Its function is as follows. Facilitates the functional incorporation of the urease nickel metallocenter. This process requires GTP hydrolysis, probably effectuated by UreG. This Cereibacter sphaeroides (strain ATCC 17029 / ATH 2.4.9) (Rhodobacter sphaeroides) protein is Urease accessory protein UreG.